Consider the following 720-residue polypeptide: Calcium/calmodulin-dependent protein kinase type II (720 aa).

The Protein kinase domain maps to 12-269; that stretch reads YDVKEELGKG…ADQALKVPWI (258 aa). ATP-binding positions include 18–26 and Lys41; that span reads LGKGAFSVV. Catalysis depends on Asp134, which acts as the Proton acceptor. Thr284 is subject to Phosphothreonine; by autocatalysis. 2 disordered regions span residues 317-345 and 504-586; these read SDST…QPTS and DNLS…NLSA. 2 stretches are compositionally biased toward polar residues: residues 504-514 and 526-540; these read DNLSASTSSDL and PPST…SQTI. Over residues 569–586 the composition is skewed to low complexity; the sequence is SSSNSSTASKSSSTNLSA.

The protein belongs to the protein kinase superfamily. CAMK Ser/Thr protein kinase family. CaMK subfamily. In terms of assembly, dodecamer. Subunits are tightly packed around a central ring-shaped scaffold with extensive contacts between the regulatory segment of one kinase and the catalytic domain of another enabling cooperative activation of a subunit by the adjacent molecule. Interacts with and phosphorylates daf-16; the interaction promotes daf-16 nuclear localization. Interacts with egl-2 and tir-1. Interacts with nsy-1. Requires Mg(2+) as cofactor. As to expression, expressed in the nervous system. Observed in the ADF and AWC neurons. Position in AWC neurons is regulated by microtubules. Localized to clusters in ventral cord neurites which appear to be required for glr-1 trafficking. Also present in oocytes.

The protein localises to the cytoplasm. The protein resides in the cell projection. It localises to the axon. Its subcellular location is the perikaryon. It carries out the reaction L-seryl-[protein] + ATP = O-phospho-L-seryl-[protein] + ADP + H(+). It catalyses the reaction L-threonyl-[protein] + ATP = O-phospho-L-threonyl-[protein] + ADP + H(+). With respect to regulation, ca2(+)/calmodulin binding removes an autoinhibitory regulatory segment located C-terminal to the kinase domain. This releases the catalytic activity of the enzyme and makes accessible a regulatory residue Thr-284. Phosphorylation of Thr-284 by another kinase domain within the oligomeric holoenzyme keeps CaMKII active in the absence of Ca(2+)/calmodulin by preventing the rebinding of the regulatory segment to the kinase domain and by increasing the affinity of calmodulin for the enzyme. Can respond to high-frequency Ca(2+) pulses to become Ca(2+) independent. Its function is as follows. Acts in the signaling of a variety of pathways and processes. Phosphorylates 'Ser-319' of daf-16 in response to stress signals, such as heat, starvation and oxidation, which plays a role in prolonging lifespan. Required for viability under chronic osmotic stress in which it acts downstream of osr-1. Has roles in locomotion, oocyte maturation, brood size, egg laying, defecation, meiotic maturation and neuronal cell fate specification. Required for the regulation of synaptic density and neuromuscular junction morphology. Regulates the synaptic trafficking of glr-1. Bidirectional modulator of neurotransmitter release with negative modulatory effects mainly mediated via slo-1 activation. Involved in activation of ADF neurons and increased tph-1 transcription following exposure to pathogenic bacteria which leads to learned olfactory aversion to the bacteria. Implicated in the muscle regulation of spicule protraction. In conjunction with egl-2 has a role in the suppression of mating behavior under food deprivation to encourage foraging. Involved in restricting str-2 expression to only one of the two AWC neurons. May suppress the functional response to an internal pacemaker, perhaps by modulating the activity of the IP3 receptor. The polypeptide is Calcium/calmodulin-dependent protein kinase type II (unc-43) (Caenorhabditis elegans).